Here is a 173-residue protein sequence, read N- to C-terminus: RNA pyrophosphohydrolase (173 aa).

A Nudix hydrolase domain is found at 6–149 (GFRANVGIII…KRDVYRKVMK (144 aa)). The Nudix box motif lies at 38 to 59 (GGVDDGETPEEAMYRELYEEVG).

Belongs to the Nudix hydrolase family. RppH subfamily. Requires a divalent metal cation as cofactor.

Functionally, accelerates the degradation of transcripts by removing pyrophosphate from the 5'-end of triphosphorylated RNA, leading to a more labile monophosphorylated state that can stimulate subsequent ribonuclease cleavage. The sequence is that of RNA pyrophosphohydrolase from Shewanella woodyi (strain ATCC 51908 / MS32).